The primary structure comprises 255 residues: 4-diphosphocytidyl-2-C-methyl-D-erythritol kinase (255 aa).

The active site involves Lys-6. 95-105 serves as a coordination point for ATP; sequence PVCAGLGGGSS. Asp-137 is a catalytic residue.

It belongs to the GHMP kinase family. IspE subfamily.

The catalysed reaction is 4-CDP-2-C-methyl-D-erythritol + ATP = 4-CDP-2-C-methyl-D-erythritol 2-phosphate + ADP + H(+). It participates in isoprenoid biosynthesis; isopentenyl diphosphate biosynthesis via DXP pathway; isopentenyl diphosphate from 1-deoxy-D-xylulose 5-phosphate: step 3/6. Its function is as follows. Catalyzes the phosphorylation of the position 2 hydroxy group of 4-diphosphocytidyl-2C-methyl-D-erythritol. This Campylobacter jejuni subsp. doylei (strain ATCC BAA-1458 / RM4099 / 269.97) protein is 4-diphosphocytidyl-2-C-methyl-D-erythritol kinase.